Reading from the N-terminus, the 432-residue chain is MVTTALNTTKSEEIFSAAQKLMPGGVSSPVRAFKSVGGQPIVFDRVKGSRVWDVDGNEYIDYVGTWGPAICGHANDEVNAALRETLEKGTSFGAPCLKENILAEMVINAVPSIEMVRFVNSGTEACMSVLRLMRAFTGREKIIKFEGCYHGHADMFLVQAGSGVATLGLPDSPGVPKTTTAATLTAPYNDLEAVKKLFAENPGEIAGVILEPVVGNSGFVLPDAGFLEGLREITKEHDALLVFDEVMTGFRISYGGAQEKFGVTPDLTTLGKVIGGGLPVGAYGGRKDIMSMVAPAGPMYQAGTLSGNPLAMTAGIKTLELLQRPGMYGQLETITKKLIDGLLSIAREAGHEVTGGNISGMFGMFFTGEPVRNYEDAKKSDLHKFSRYHRGMLEQGIYLAPSQFEAGFTSLAHTDEDIEKTLAAAKVVLNNL.

K272 carries the N6-(pyridoxal phosphate)lysine modification.

It belongs to the class-III pyridoxal-phosphate-dependent aminotransferase family. HemL subfamily. In terms of assembly, homodimer. It depends on pyridoxal 5'-phosphate as a cofactor.

The protein resides in the cytoplasm. It catalyses the reaction (S)-4-amino-5-oxopentanoate = 5-aminolevulinate. The protein operates within porphyrin-containing compound metabolism; protoporphyrin-IX biosynthesis; 5-aminolevulinate from L-glutamyl-tRNA(Glu): step 2/2. It participates in porphyrin-containing compound metabolism; chlorophyll biosynthesis. This Picosynechococcus sp. (strain ATCC 27264 / PCC 7002 / PR-6) (Agmenellum quadruplicatum) protein is Glutamate-1-semialdehyde 2,1-aminomutase.